The following is a 345-amino-acid chain: Nicotinate-nucleotide--dimethylbenzimidazole phosphoribosyltransferase (345 aa).

Residue Glu-311 is the Proton acceptor of the active site.

This sequence belongs to the CobT family.

The enzyme catalyses 5,6-dimethylbenzimidazole + nicotinate beta-D-ribonucleotide = alpha-ribazole 5'-phosphate + nicotinate + H(+). It functions in the pathway nucleoside biosynthesis; alpha-ribazole biosynthesis; alpha-ribazole from 5,6-dimethylbenzimidazole: step 1/2. In terms of biological role, catalyzes the synthesis of alpha-ribazole-5'-phosphate from nicotinate mononucleotide (NAMN) and 5,6-dimethylbenzimidazole (DMB). The sequence is that of Nicotinate-nucleotide--dimethylbenzimidazole phosphoribosyltransferase from Janthinobacterium sp. (strain Marseille) (Minibacterium massiliensis).